A 4903-amino-acid polypeptide reads, in one-letter code: Histone-lysine N-methyltransferase 2C (4903 aa).

Disordered regions lie at residues 1–116 and 159–202; these read MSSE…SEES and LTLP…PPQQ. Residues 13–28 are compositionally biased toward pro residues; sequence QPPPAPPEEPGAPAPS. A phosphoserine mark is found at Ser28 and Ser46. The a.T hook DNA-binding region spans 34-46; the sequence is KRPRGRPRKDGAS. Residues 50 to 59 show a composition bias toward basic residues; sequence RARKKPRSRG. A compositionally biased stretch (acidic residues) spans 64–81; it reads EDEDSMDGLETTETENIV. Phosphoserine is present on residues Ser89 and Ser113. Residues 101–116 show a composition bias toward polar residues; sequence SKQPVSALQRSVSEES. Residues 226-261 form a C2HC pre-PHD-type 1; degenerate zinc finger; sequence ELSLVGLPDAIDVQALFDSTGTCWAHHRCVEWSLGI. PHD-type zinc fingers lie at residues 282-330, 340-390, 387-437, and 463-519; these read ERCA…PEHI, DANC…CKVC, CKVC…CRIC, and DNLC…CKHL. The RING-type zinc finger occupies 343–388; the sequence is CAVCDSPGDLLDQFFCTTCGQHYHGMCLDIAVTPLKRAGWQCPECK. A DHHC domain is found at 435 to 488; that stretch reads RICIECGTRSSTQWHHNCLICDTCYQQQDNLCPFCGKCYHPELQKDMLHCNMCK. Residues 671–703 are disordered; the sequence is SEVASKELSPPKSAPETAAPEALLSPHSERSLS. An N6-acetyllysine modification is found at Lys751. Positions 824–835 are enriched in basic residues; it reads TKRKFSPGRPRS. Disordered regions lie at residues 824 to 857 and 882 to 904; these read TKRK…DTSE and GFPG…GRSK. Over residues 838-848 the composition is skewed to polar residues; that stretch reads GAWSNHNTVSP. Phosphoserine is present on Ser847. 3 PHD-type zinc fingers span residues 950-1003, 1000-1050, and 1077-1132; these read QDMC…CTVC, CTVC…CVWC, and LSSC…CRPY. The interval 1208–1318 is disordered; the sequence is AVLQTPPDIQ…PSRDDGWREQ (111 aa). The span at 1217–1263 shows a compositional bias: basic and acidic residues; that stretch reads QSEHSRDGEMDDSREGELMDCDGKSESSPEREAGDDETKGIEGTDAI. Ser1294 is modified (phosphoserine). Basic and acidic residues predominate over residues 1309 to 1318; the sequence is PSRDDGWREQ. Residues 1330–1352 are a coiled coil; that stretch reads VAENTDKIKKRYRKRKNKLEETF. Disordered regions lie at residues 1397–1419 and 1447–1473; these read SDPL…ADDP and HSDI…RPLT. 2 stretches are compositionally biased toward polar residues: residues 1406-1415 and 1455-1471; these read TSAKPGTQGT and ADAS…SSRP. Lys1497 bears the N6-acetyllysine mark. Disordered regions lie at residues 1594-1617 and 1698-1757; these read NAIA…ENDT and VQMS…AKIE. Residues 1599–1617 show a composition bias toward polar residues; sequence DPNSSWAPTTPSMEGENDT. The span at 1707 to 1717 shows a compositional bias: low complexity; it reads RQQQQDSIDPS. Over residues 1718-1742 the composition is skewed to basic and acidic residues; that stretch reads SRIDSDLFKDPLKQRESEHEQEWKF. Residues 1743 to 1790 adopt a coiled-coil conformation; sequence RQQMRQKSKQQAKIEATQKLEQVKNEQQQQQQQQQQQQQQQLASQHLL. An N6-acetyllysine modification is found at Lys1761. Residues 1791 to 2375 are disordered; the sequence is VAPGSDTPSS…MSQADTEKLR (585 aa). Residues 1796-1819 show a composition bias toward polar residues; it reads DTPSSGAQSPLTPQAGNGNVSPAQ. Residues 1855–1886 are compositionally biased toward low complexity; that stretch reads PSRIPVQESLSQSQNSQPPSPQMFSPGSSHSR. Ser1983 carries the phosphoserine modification. A compositionally biased stretch (polar residues) spans 1986–2001; sequence ISEQSTKGPLTTGTSD. Lys2005 carries the N6-acetyllysine modification. Polar residues-rich tracts occupy residues 2113-2124, 2137-2151, and 2325-2334; these read GTISRSASQDPY, SYSQ…NPDP, and GNFSTSSNLP. Positions 2335-2347 are enriched in low complexity; it reads VSSQGQQFSSVSQ. A compositionally biased stretch (polar residues) spans 2355-2369; sequence SGGTDTQNTVNMSQA. Residues Arg2447 and Arg2563 each carry the asymmetric dimethylarginine modification. 3 disordered regions span residues 2561–2668, 2702–2736, and 2786–2844; these read RSRL…DNLE, KDLD…NDPN, and VEPK…GDAD. Polar residues-rich tracts occupy residues 2602–2611, 2621–2636, and 2653–2668; these read QPSQCLSNQL, PPSQ…QSSI, and PLST…DNLE. Residues 2788–2807 show a composition bias toward basic and acidic residues; the sequence is PKTRDQGDKTMVLEDKDLPQ. Residues Lys2796 and Lys2803 each carry the N6-acetyllysine modification. At Ser2822 the chain carries Phosphoserine. Tyr2824 is subject to Phosphotyrosine. A compositionally biased stretch (basic and acidic residues) spans 2825-2843; that stretch reads SKEEIQSEIKNHDDSRGDA. N6-acetyllysine occurs at positions 2826 and 2862. Residues 2920 to 2953 are disordered; the sequence is EKCDDSDIRPSGSSPPSLPISPSTHGSSLPPTLI. Residues 2929–2942 are compositionally biased toward low complexity; that stretch reads PSGSSPPSLPISPS. 2 coiled-coil regions span residues 3047 to 3074 and 3166 to 3193; these read LLQD…QRSE and NDSQ…YLEE. A compositionally biased stretch (basic residues) spans 3198 to 3214; the sequence is HRKSKKALSAKQRTAKK. Residues 3198-3223 form a disordered region; sequence HRKSKKALSAKQRTAKKAGREFPEED. Coiled-coil stretches lie at residues 3224–3270 and 3387–3432; these read AEQL…QQCA and FSES…QHCL. Disordered regions lie at residues 3329 to 3407 and 3444 to 3910; these read PGWQ…QERQ and SQMP…QKMA. Over residues 3391–3407 the composition is skewed to basic and acidic residues; the sequence is FQERERKERLREQQERQ. The segment covering 3464-3485 has biased composition (low complexity); that stretch reads LQQSPQHQQQIGPVLQQQNVQQ. 4 stretches are compositionally biased toward polar residues: residues 3486–3503, 3515–3524, 3557–3586, and 3632–3647; these read GSVN…NEQR, PSASGGSPNF, PVAN…SLIQ, and LSET…PSEL. Composition is skewed to basic and acidic residues over residues 3697–3739 and 3795–3804; these read AEAD…KIKD and SSTKDGKLIE. Lys3709 is modified (N6-acetyllysine). Residues 3871–3885 show a composition bias toward polar residues; that stretch reads MYSSSDSFTHLKQQN. Over residues 3890 to 3904 the composition is skewed to pro residues; the sequence is PPTPPASLPPTPPPM. Residue Ser4027 is modified to Phosphoserine. Arg4132 carries the post-translational modification Asymmetric dimethylarginine. Residues 4159–4184 form a disordered region; sequence PNVPFPPTSNGLSGYKDSSHGPAEGA. Ser4260 is modified (phosphoserine). The C2HC pre-PHD-type 2 zinc-finger motif lies at 4391–4431; that stretch reads CRKCCFCHEEGDGLTDGPARLLNLDLDLWVHLNCALWSTEV. Residues 4452–4499 form a PHD-type 8 zinc finger; the sequence is MKCVFCHKTGATSGCHRFRCTNIYHFTCATKAQCMFFKDKTMLCPMHK. The FYR N-terminal domain occupies 4537–4597; the sequence is DHTFRVGSLI…CRYLCSIEEK (61 aa). An FYR C-terminal domain is found at 4598–4683; it reads DGRPVFVIRI…EACENYTFRY (86 aa). Positions 4699–4704 match the WDR5 interaction motif (WIN) motif; sequence GCARSE. Residues 4763–4879 enclose the SET domain; sequence SNVYLARSRI…KGEELCYDYK (117 aa). Residues Tyr4817 and 4840 to 4841 each bind S-adenosyl-L-methionine; that span reads NH. Zn(2+) is bound by residues Cys4843, Cys4891, Cys4893, and Cys4898. The Post-SET domain maps to 4887 to 4903; sequence HKIPCHCGAVNCRKWMN.

The protein belongs to the class V-like SAM-binding methyltransferase superfamily. Histone-lysine methyltransferase family. TRX/MLL subfamily. As to quaternary structure, component of the MLL3 complex (also named ASCOM complex), at least composed of catalytic subunit KMT2C/MLL3, ASH2L, RBBP5, WDR5, NCOA6, DPY30, KDM6A, PAXIP1/PTIP, PAGR1 and alpha- and beta-tubulin. Forms a core complex with the evolutionary conserved subcomplex WRAD composed of WDR5, RBBP5, ASH2L/ASH2 and DPY30 subunits; WRAD differentially stimulates the methyltransferase activity. Interacts (via WIN motif) with WDR5. In terms of tissue distribution, in adult, detected in testis, kidney, spleen and lung, weakly expressed in brain and absent in heart and liver. First detected throughout the embryo at 8 dpc when expression is strong in forebrain neuroepithelium and absent in heart. Expressed in the eye lens between 10 and 14.5 dpc. By 13 dpc, expressed strongly in spinal cord, hand/foot plates and gonads.

The protein localises to the nucleus. The enzyme catalyses L-lysyl(4)-[histone H3] + S-adenosyl-L-methionine = N(6)-methyl-L-lysyl(4)-[histone H3] + S-adenosyl-L-homocysteine + H(+). Its function is as follows. Histone methyltransferase that catalyzes methyl group transfer from S-adenosyl-L-methionine to the epsilon-amino group of 'Lys-4' of histone H3 (H3K4). Part of chromatin remodeling machinery predominantly forms H3K4me1 methylation marks at active chromatin sites where transcription and DNA repair take place. Likely plays a redundant role with KMT2D in enriching H3K4me1 mark on primed and active enhancer elements. The protein is Histone-lysine N-methyltransferase 2C (Kmt2c) of Mus musculus (Mouse).